The following is a 456-amino-acid chain: Bacteriochlorophyllide d C-12(1)-methyltransferase (456 aa).

The 228-residue stretch at 178–405 folds into the Radical SAM core domain; the sequence is HAKKYSQLIP…MFEPKKLGGE (228 aa). [4Fe-4S] cluster is bound by residues cysteine 194, cysteine 198, and cysteine 201.

This sequence belongs to the radical SAM superfamily. [4Fe-4S] cluster serves as cofactor.

It localises to the cytoplasm. The catalysed reaction is 8-ethyl-12-methyl-3-vinylbacteriochlorophyllide d + S-adenosyl-L-methionine = 8,12-diethyl-3-vinylbacteriochlorophyllide d + S-adenosyl-L-homocysteine + H(+). It participates in porphyrin-containing compound metabolism; bacteriochlorophyll biosynthesis (light-independent). Involved in the biosynthesis of the major light-harvesting pigment bacteriochlorophyll c (BChlc), which confers a significant competitive advantage to green sulfur bacteria living at limiting red and near-infrared light intensities. BchR is a methyltransferase that adds a single methyl group to the methyl carbon at the C-12(1) position of 8-ethyl-12-methyl-3-vinylbacteriochlorophyllide d to yield 8,12-diethyl-3-vinylbacteriochlorophyllide d. In Chlorobaculum tepidum (strain ATCC 49652 / DSM 12025 / NBRC 103806 / TLS) (Chlorobium tepidum), this protein is Bacteriochlorophyllide d C-12(1)-methyltransferase.